The following is a 30-amino-acid chain: Photosystem I reaction center subunit XII (30 aa).

Residues 7–27 (VFIGLVIALVPAILAFKLGLS) form a helical membrane-spanning segment.

Belongs to the PsaM family.

The protein resides in the plastid. It localises to the chloroplast thylakoid membrane. The chain is Photosystem I reaction center subunit XII from Cyanidium caldarium (Red alga).